Here is a 135-residue protein sequence, read N- to C-terminus: Small ribosomal subunit protein uS12 (135 aa).

Residues 1 to 24 (MPTINQLVRKGRHSKTTKSKSPAL) are disordered. The segment covering 9-18 (RKGRHSKTTK) has biased composition (basic residues). Asp-102 carries the 3-methylthioaspartic acid modification.

The protein belongs to the universal ribosomal protein uS12 family. As to quaternary structure, part of the 30S ribosomal subunit. Contacts proteins S8 and S17. May interact with IF1 in the 30S initiation complex.

Functionally, with S4 and S5 plays an important role in translational accuracy. In terms of biological role, interacts with and stabilizes bases of the 16S rRNA that are involved in tRNA selection in the A site and with the mRNA backbone. Located at the interface of the 30S and 50S subunits, it traverses the body of the 30S subunit contacting proteins on the other side and probably holding the rRNA structure together. The combined cluster of proteins S8, S12 and S17 appears to hold together the shoulder and platform of the 30S subunit. This chain is Small ribosomal subunit protein uS12, found in Lactobacillus delbrueckii subsp. bulgaricus (strain ATCC 11842 / DSM 20081 / BCRC 10696 / JCM 1002 / NBRC 13953 / NCIMB 11778 / NCTC 12712 / WDCM 00102 / Lb 14).